Consider the following 305-residue polypeptide: Pseudouridine-5'-phosphate glycosidase (305 aa).

The active-site Proton donor is the glutamate 22. Substrate is bound by residues lysine 84 and valine 104. Mn(2+) is bound at residue aspartate 136. Substrate is bound at residue 138-140 (SAD). Lysine 157 functions as the Nucleophile in the catalytic mechanism.

The protein belongs to the pseudouridine-5'-phosphate glycosidase family. As to quaternary structure, homotrimer. The cofactor is Mn(2+).

The enzyme catalyses D-ribose 5-phosphate + uracil = psi-UMP + H2O. In terms of biological role, catalyzes the reversible cleavage of pseudouridine 5'-phosphate (PsiMP) to ribose 5-phosphate and uracil. Functions biologically in the cleavage direction, as part of a pseudouridine degradation pathway. The chain is Pseudouridine-5'-phosphate glycosidase from Chloroflexus aurantiacus (strain ATCC 29364 / DSM 637 / Y-400-fl).